A 242-amino-acid chain; its full sequence is MIKNYLGRRWLNNPAIQAYVKQNAAVAHSTVFQGNLYEYTVMRELSEKLRMTKLRKTGGAHDGGVDIKGSWPVDDIYWKISSLMPNLEMASNIKRTNSQNGFVLKPLKYRIIDHTFEPLKVLVQCKAFTKSKLSPREFRELVGTFTSLVSHSQRNKTVCIMCSPHMLTKDTLNLINNITLPLIYLRVEMLKEKTDGHFDLINSGKLINYYENSYASTLMQDCKISEWLKLKLYKNSDFNSEK.

The protein belongs to the RRG7 family.

Its subcellular location is the mitochondrion. The chain is Required for respiratory growth protein 7, mitochondrial (RRG7) from Saccharomyces cerevisiae (strain ATCC 204508 / S288c) (Baker's yeast).